The chain runs to 444 residues: Trigger factor (444 aa).

Residues 166-251 form the PPIase FKBP-type domain; that stretch reads GDQIVIDFKG…VKAVKAPKAA (86 aa).

This sequence belongs to the FKBP-type PPIase family. Tig subfamily.

It is found in the cytoplasm. It catalyses the reaction [protein]-peptidylproline (omega=180) = [protein]-peptidylproline (omega=0). Functionally, involved in protein export. Acts as a chaperone by maintaining the newly synthesized protein in an open conformation. Functions as a peptidyl-prolyl cis-trans isomerase. This is Trigger factor from Paracoccus denitrificans (strain Pd 1222).